A 150-amino-acid chain; its full sequence is Lipoprotein signal peptidase (150 aa).

3 helical membrane-spanning segments follow: residues 5-25 (LSLVIIVVGIIADQVFKNWVV), 59-79 (QQWFFLVLTPIVLIVALWFLW), and 82-102 (MGQNWYFAGLTLIIAGALGNF). Catalysis depends on residues D113 and D129. The helical transmembrane segment at 124 to 144 (IFNIADILLSVGFVVLFIAIL) threads the bilayer.

This sequence belongs to the peptidase A8 family.

The protein resides in the cell membrane. It catalyses the reaction Release of signal peptides from bacterial membrane prolipoproteins. Hydrolyzes -Xaa-Yaa-Zaa-|-(S,diacylglyceryl)Cys-, in which Xaa is hydrophobic (preferably Leu), and Yaa (Ala or Ser) and Zaa (Gly or Ala) have small, neutral side chains.. It participates in protein modification; lipoprotein biosynthesis (signal peptide cleavage). Functionally, this protein specifically catalyzes the removal of signal peptides from prolipoproteins. The chain is Lipoprotein signal peptidase from Lactococcus lactis subsp. cremoris (strain SK11).